The following is a 161-amino-acid chain: Regulator of ribonuclease activity A (161 aa).

The protein belongs to the RraA family. In terms of assembly, homotrimer. Binds to both RNA-binding sites in the C-terminal region of Rne and to RhlB.

Its subcellular location is the cytoplasm. Globally modulates RNA abundance by binding to RNase E (Rne) and regulating its endonucleolytic activity. Can modulate Rne action in a substrate-dependent manner by altering the composition of the degradosome. Modulates RNA-binding and helicase activities of the degradosome. This is Regulator of ribonuclease activity A from Salmonella agona (strain SL483).